The chain runs to 100 residues: Aspartyl/glutamyl-tRNA(Asn/Gln) amidotransferase subunit C (100 aa).

Belongs to the GatC family. In terms of assembly, heterotrimer of A, B and C subunits.

It catalyses the reaction L-glutamyl-tRNA(Gln) + L-glutamine + ATP + H2O = L-glutaminyl-tRNA(Gln) + L-glutamate + ADP + phosphate + H(+). It carries out the reaction L-aspartyl-tRNA(Asn) + L-glutamine + ATP + H2O = L-asparaginyl-tRNA(Asn) + L-glutamate + ADP + phosphate + 2 H(+). In terms of biological role, allows the formation of correctly charged Asn-tRNA(Asn) or Gln-tRNA(Gln) through the transamidation of misacylated Asp-tRNA(Asn) or Glu-tRNA(Gln) in organisms which lack either or both of asparaginyl-tRNA or glutaminyl-tRNA synthetases. The reaction takes place in the presence of glutamine and ATP through an activated phospho-Asp-tRNA(Asn) or phospho-Glu-tRNA(Gln). The chain is Aspartyl/glutamyl-tRNA(Asn/Gln) amidotransferase subunit C from Staphylococcus aureus (strain Newman).